A 360-amino-acid polypeptide reads, in one-letter code: MAKVKIGINGFGRIGRLVARVILQSDDCELVAINDPFITTDYMTYMFKYDSVHGQWKHHELKVKDEKTLLFGERPVTVFGNRNPEEIPWGQTGADYVVESTGVFTDKDKAAAHLKGGAKKVIISAPSKDAPMFVVGVNEHEYKSELNIVSNASCTTNCLAPLAKVINDKFGIVEGLMTTVHSITATQKTVDGPSAKDWRGGRAASFNIIPSSTGAAKAVGKVLPALNGKLTGMSFRVPTVDVSVVDLTVRLEKEATYEQIKAAIKEESEGKMKGILGYTEDDVVSTDFVGDNRSSIFDAKAGICLNGNFVKLVSWYDNEWGYSSRVVDLIRHMSKTTSKLDSVALACVDAVSTLILSSEC.

Residues 13-14 (RI), aspartate 35, and arginine 82 contribute to the NAD(+) site. D-glyceraldehyde 3-phosphate contacts are provided by residues 153-155 (SCT), threonine 184, 213-214 (TG), and arginine 236. The active-site Nucleophile is cysteine 154. Asparagine 318 serves as a coordination point for NAD(+).

The protein belongs to the glyceraldehyde-3-phosphate dehydrogenase family. Homotetramer.

The catalysed reaction is D-glyceraldehyde 3-phosphate + phosphate + NAD(+) = (2R)-3-phospho-glyceroyl phosphate + NADH + H(+). Its pathway is carbohydrate degradation; glycolysis; pyruvate from D-glyceraldehyde 3-phosphate: step 1/5. Key enzyme in glycolysis that catalyzes the first step of the pathway by converting D-glyceraldehyde 3-phosphate (G3P) into 3-phospho-D-glyceroyl phosphate. Essential for the maintenance of cellular ATP levels and carbohydrate metabolism. This Atriplex nummularia (Old man saltbush) protein is Glyceraldehyde-3-phosphate dehydrogenase.